Consider the following 217-residue polypeptide: Elongation factor Ts (217 aa).

Residues 82–85 (TDFV) form an involved in Mg(2+) ion dislocation from EF-Tu region.

This sequence belongs to the EF-Ts family.

The protein resides in the cytoplasm. In terms of biological role, associates with the EF-Tu.GDP complex and induces the exchange of GDP to GTP. It remains bound to the aminoacyl-tRNA.EF-Tu.GTP complex up to the GTP hydrolysis stage on the ribosome. The sequence is that of Elongation factor Ts from Desulforamulus reducens (strain ATCC BAA-1160 / DSM 100696 / MI-1) (Desulfotomaculum reducens).